We begin with the raw amino-acid sequence, 187 residues long: Putative protein SSX8 (187 aa).

Disordered regions lie at residues 1 to 21 (MNGDDAFAKRPRDDDKASEKR) and 109 to 187 (PKIM…EDDE). The 64-residue stretch at 20-83 (KRSKAFNDIA…KQATDFQGNY (64 aa)) folds into the KRAB-related domain. The residue at position 123 (S123) is a Phosphoserine. Basic residues predominate over residues 152 to 168 (KRSGPKRGRHAWTHRLR).

This sequence belongs to the SSX family. As to expression, not detected in any normal or tumor tissues.

Could act as a modulator of transcription. This Homo sapiens (Human) protein is Putative protein SSX8.